The primary structure comprises 392 residues: ERBB-3 BINDING PROTEIN 1 (392 aa).

2 necessary for nucleolar localization regions span residues 1-50 and 298-392; these read MSSD…IVDI and HLQP…NAQE. The segment at 48–56 is RNA-binding; that stretch reads VDICEKGDS. The interaction with RNA stretch occupies residues 355–372; the sequence is GIKKKKGGGKKKKAQKAG. The short motif at 357 to 367 is the Nuclear localization signal element; sequence KKKKGGGKKKK. A compositionally biased stretch (basic residues) spans 358-369; sequence KKKGGGKKKKAQ. Positions 358-392 are disordered; sequence KKKGGGKKKKAQKAGEKGEASTEAEPMDASSNAQE.

It belongs to the peptidase M24 family. In terms of assembly, component of a ribonucleoprotein complex. Interacts with REIL1 and REIL2. As to expression, strongly expressed in calls, roots and flowers, to a lower extent, in stems and siliques, but hardly detectable in leaves.

The protein localises to the nucleus. Its function is as follows. Binds RNA. Associates with 28S, 18S and 5.8S mature rRNAs, several rRNA precursors and probably U3 small nucleolar RNA. May be involved in regulation of intermediate and late steps of rRNA processing. May be involved in ribosome assembly. Required for expression of cell cycle genes such as CYCD3-1, RNR2A and CDKB1-1. Promotes, in a dose- and auxin-dependent manner, organ growth by stimulating both cell proliferation and expansion, via the regulation of RBR1 levels. This Arabidopsis thaliana (Mouse-ear cress) protein is ERBB-3 BINDING PROTEIN 1.